A 321-amino-acid polypeptide reads, in one-letter code: ATP-dependent 6-phosphofructokinase (321 aa).

Glycine 12 serves as a coordination point for ATP. ADP contacts are provided by residues 22–26 (RGVVR) and 55–60 (RYSVSD). Residues 73-74 (RF) and 103-106 (GDGS) each bind ATP. Aspartate 104 provides a ligand contact to Mg(2+). Residue 127–129 (TID) participates in substrate binding. The Proton acceptor role is filled by aspartate 129. Arginine 156 provides a ligand contact to ADP. Residues arginine 164 and 171-173 (MGR) each bind substrate. ADP contacts are provided by residues 187-189 (GCE), lysine 213, and 215-217 (KRH). Residues glutamate 224, arginine 245, and 251 to 254 (HIQR) each bind substrate.

Belongs to the phosphofructokinase type A (PFKA) family. ATP-dependent PFK group I subfamily. Prokaryotic clade 'B1' sub-subfamily. As to quaternary structure, homotetramer. The cofactor is Mg(2+).

It is found in the cytoplasm. The catalysed reaction is beta-D-fructose 6-phosphate + ATP = beta-D-fructose 1,6-bisphosphate + ADP + H(+). It functions in the pathway carbohydrate degradation; glycolysis; D-glyceraldehyde 3-phosphate and glycerone phosphate from D-glucose: step 3/4. Allosterically activated by ADP and other diphosphonucleosides, and allosterically inhibited by phosphoenolpyruvate. Catalyzes the phosphorylation of D-fructose 6-phosphate to fructose 1,6-bisphosphate by ATP, the first committing step of glycolysis. This Histophilus somni (strain 129Pt) (Haemophilus somnus) protein is ATP-dependent 6-phosphofructokinase.